The following is a 299-amino-acid chain: Coenzyme PQQ synthesis protein B (299 aa).

This sequence belongs to the PqqB family.

It participates in cofactor biosynthesis; pyrroloquinoline quinone biosynthesis. In terms of biological role, may be involved in the transport of PQQ or its precursor to the periplasm. In Methylorubrum extorquens (strain ATCC 14718 / DSM 1338 / JCM 2805 / NCIMB 9133 / AM1) (Methylobacterium extorquens), this protein is Coenzyme PQQ synthesis protein B.